The sequence spans 581 residues: Chaperonin GroEL 1 (581 aa).

ATP is bound by residues 29-32, 86-90, Gly413, and Asp492; these read TIGP and DGTTT. The interval 522-543 is disordered; that stretch reads PEPEPAAPGGPSGDPMGGMGGM. A compositionally biased stretch (gly residues) spans 531 to 543; that stretch reads GPSGDPMGGMGGM.

This sequence belongs to the chaperonin (HSP60) family. In terms of assembly, forms a cylinder of 14 subunits composed of two heptameric rings stacked back-to-back. Interacts with the co-chaperonin GroES.

It localises to the cytoplasm. It carries out the reaction ATP + H2O + a folded polypeptide = ADP + phosphate + an unfolded polypeptide.. In terms of biological role, together with its co-chaperonin GroES, plays an essential role in assisting protein folding. The GroEL-GroES system forms a nano-cage that allows encapsulation of the non-native substrate proteins and provides a physical environment optimized to promote and accelerate protein folding. The polypeptide is Chaperonin GroEL 1 (Prochlorococcus marinus (strain MIT 9215)).